Reading from the N-terminus, the 63-residue chain is DNA-directed RNA polymerase 7 kDa subunit (63 aa).

This sequence belongs to the poxviridae DNA-directed RNA polymerase 7 kDa subunit family. In terms of assembly, the DNA-dependent RNA polymerase used for intermediate and late genes expression consists of eight subunits 147 kDa, 133 kDa, 35 kDa, 30 kDa, 22 kDa, 19 kDa, 18 kDa and 7 kDa totalling more than 500 kDa in mass. The same holoenzyme, with the addition of the transcription-specificity factor RAP94, is used for early gene expression.

The protein resides in the virion. It catalyses the reaction RNA(n) + a ribonucleoside 5'-triphosphate = RNA(n+1) + diphosphate. In terms of biological role, part of the DNA-dependent RNA polymerase which catalyzes the transcription of viral DNA into RNA using the four ribonucleoside triphosphates as substrates. Responsible for the transcription of early, intermediate and late genes. DNA-dependent RNA polymerase associates with the early transcription factor (ETF) thereby allowing the early genes transcription. Late transcription, and probably also intermediate transcription, require newly synthesized RNA polymerase. The protein is DNA-directed RNA polymerase 7 kDa subunit (RPO7) of Fowlpox virus (strain NVSL) (FPV).